The following is a 198-amino-acid chain: MAKQPSDVSSECDREGRQLQPAERPPQLRPGAPTSLQTEPQGNPEGNHGGEGDSCPHGSPQGPLAPPASPGPFATRSPLFIFMRRSSLLSRSSSGYFSFDTDRSPAPMSCDKSTQTPSPPCQAFNHYLSAMASMRQAEPADMRPEIWIAQELRRIGDEFNAYYARRVFLNNYQAAEDHPRMVILRLLRYIVRLVWRMH.

The disordered stretch occupies residues 1–72; sequence MAKQPSDVSS…PLAPPASPGP (72 aa). S69 is modified (phosphoserine; by MAPK). Phosphoserine is present on residues S77, S87, and S94. The BH3 motif lies at 148–162; the sequence is IAQELRRIGDEFNAY.

The protein belongs to the Bcl-2 family. In terms of assembly, forms heterodimers with a number of antiapoptotic Bcl-2 proteins, including MCL1, BCL2, BCL2L1 isoform Bcl-X(L), BCL2A1/BFL-1, BHRF1, and BCL2L2/BCLW. Does not heterodimerize with proapoptotic proteins such as BAD, BOK or BAK. Identified in a complex containing BCL2L11, DYNLL1 and BCL2L1 isoform Bcl-X(L); BH3 integrity is required for BCL2L1-binding. Interacts with YWHAZ. When phosphorylated, interacts with TRIM2; this interaction is associated with ubiquitination and degradation. Interacts with MCL1; may sequester BCL2L11 to prevent its pro-apoptotic activity. Interacts with GIMAP5. Interacts with BCL2L10/BCL-B. As to quaternary structure, interacts (when phosphorylated) with USP27X; the interaction leads to BCL2L11 deubiquitination and stabilization. Interacts with humanin; the interaction prevents BIM-induced apoptosis. Does not interact with humanin. In terms of assembly, interacts with BAX; the interaction may lead to BAX activation through conformational change. Does not interact with humanin. As to quaternary structure, interacts with BAX; the interaction may lead to BAX activation through conformational change. Phosphorylation at Ser-69 by MAPK1/MAPK3 leads to interaction with TRIM2 and polyubiquitination, followed by proteasomal degradation. Deubiquitination catalyzed by USP27X stabilizes the protein. Post-translationally, ubiquitination by TRIM2 following phosphorylation by MAPK1/MAPK3 leads to proteasomal degradation. Conversely, deubiquitination catalyzed by USP27X stabilizes the protein. Isoform BimEL, isoform BimL and isoform BimS are the predominant isoforms and are widely expressed with tissue-specific variation. Isoform Bim-gamma is most abundantly expressed in small intestine and colon, and in lower levels in spleen, prostate, testis, heart, liver and kidney.

The protein localises to the endomembrane system. Its subcellular location is the mitochondrion. In terms of biological role, induces apoptosis and anoikis. Isoform BimL is more potent than isoform BimEL. Isoform Bim-alpha1, isoform Bim-alpha2 and isoform Bim-alpha3 induce apoptosis, although less potent than isoform BimEL, isoform BimL and isoform BimS. Isoform Bim-gamma induces apoptosis. Isoform Bim-alpha3 induces apoptosis possibly through a caspase-mediated pathway. Isoform BimAC and isoform BimABC lack the ability to induce apoptosis. The sequence is that of Bcl-2-like protein 11 (BCL2L11) from Homo sapiens (Human).